Consider the following 91-residue polypeptide: Small ribosomal subunit protein bS16 (91 aa).

The protein belongs to the bacterial ribosomal protein bS16 family.

This is Small ribosomal subunit protein bS16 from Lacticaseibacillus casei (strain BL23) (Lactobacillus casei).